Consider the following 275-residue polypeptide: NAC domain-containing protein 2 (275 aa).

The region spanning 10-162 (LPPGFRFHPT…DWVLCRIYKK (153 aa)) is the NAC domain. A DNA-binding region spans residues 107 to 168 (VGIKKALVFY…IYKKKNLERA (62 aa)).

As to expression, expressed in roots, stem, flowers, and leaves.

The protein resides in the nucleus. Transcription factor that binds DNA motifs 5'-CGT[AG](5N)NACG[ACT][AC][AT][ACG][ACT]-3' and 5'-CACG[ACT][AC][AT][AGT][CT]-3' in target genes promoters. Promotes leaf senescence (developmental, light-induced and ABA-induced senescence) and regulates fruit yield and sugar content, probably by establishing abscisic acid (ABA) homeostasis. Activates the expression of senescence and ABA associated genes including NCED1, ABCG40, CYP707A2, SAG113, SGR1 and PAO, by directly binding to their promoters. This is NAC domain-containing protein 2 from Solanum lycopersicum (Tomato).